The sequence spans 1147 residues: Cellulose synthase-like protein D3 (1147 aa).

Disordered stretches follow at residues 1 to 33 (MSTG…PAGQ) and 259 to 281 (KLGG…PFKP). 2 stretches are compositionally biased toward gly residues: residues 14–29 (GGVG…GPRG) and 262–272 (GDGGGGGGGGP). 2 helical membrane-spanning segments follow: residues 292–312 (VISP…FYLT) and 322–342 (ALWL…SWLL). Residues Asp422 and Asp847 contribute to the active site. 6 consecutive transmembrane segments (helical) span residues 929–949 (IFLL…FFIV), 954–974 (IAFL…GILE), 1001–1021 (LYAV…SFTL), 1045–1065 (LLIP…FAFA), 1075–1095 (WGKF…LNPF), and 1108–1128 (TIVF…WVAI).

This sequence belongs to the glycosyltransferase 2 family. Plant cellulose synthase-like D subfamily.

The protein resides in the golgi apparatus membrane. In terms of biological role, thought to be a Golgi-localized beta-glycan synthase that polymerize the backbones of noncellulosic polysaccharides (hemicelluloses) of plant cell wall. This is Cellulose synthase-like protein D3 (CSLD3) from Oryza sativa subsp. japonica (Rice).